Consider the following 48-residue polypeptide: ATP synthase protein 8 (48 aa).

A helical transmembrane segment spans residues 12 to 32 (LLTGGILAISLLLYFVATYLL).

It belongs to the ATPase protein 8 family. In terms of assembly, F-type ATPases have 2 components, CF(1) - the catalytic core - and CF(0) - the membrane proton channel.

The protein resides in the mitochondrion membrane. Its function is as follows. Mitochondrial membrane ATP synthase (F(1)F(0) ATP synthase or Complex V) produces ATP from ADP in the presence of a proton gradient across the membrane which is generated by electron transport complexes of the respiratory chain. F-type ATPases consist of two structural domains, F(1) - containing the extramembraneous catalytic core and F(0) - containing the membrane proton channel, linked together by a central stalk and a peripheral stalk. During catalysis, ATP synthesis in the catalytic domain of F(1) is coupled via a rotary mechanism of the central stalk subunits to proton translocation. Part of the complex F(0) domain. Minor subunit located with subunit a in the membrane. This Candida parapsilosis (Yeast) protein is ATP synthase protein 8 (ATP8).